Here is a 193-residue protein sequence, read N- to C-terminus: Deoxycytidylate deaminase (193 aa).

One can recognise a CMP/dCMP-type deaminase domain in the interval 1–171; sequence MKASTVLQIA…DILRNAGIEV (171 aa). The Zn(2+) site is built by cysteine 19, cysteine 49, histidine 94, glutamate 102, and histidine 104. Glutamate 106 (proton donor) is an active-site residue. Residues cysteine 132 and cysteine 135 each contribute to the Zn(2+) site. Position 153 (tyrosine 153) interacts with substrate.

Belongs to the cytidine and deoxycytidylate deaminase family. Homohexamer. It depends on Zn(2+) as a cofactor.

It carries out the reaction dCMP + H2O + H(+) = dUMP + NH4(+). Allosteric enzyme whose activity is greatly influenced by the end products of its metabolic pathway, dCTP and dTTP. Supplies the nucleotide substrate for thymidylate synthetase. In Escherichia coli (Bacteriophage T4), this protein is Deoxycytidylate deaminase (CD).